The sequence spans 247 residues: Small ribosomal subunit protein uS3 (247 aa).

One can recognise a KH type-2 domain in the interval 39-109 (IRSMIRSFPE…KVQIKVKEIK (71 aa)). Residues 224 to 247 (RSRRESGQKSDELVRDERTHAERG) are disordered. Residues 227 to 247 (RESGQKSDELVRDERTHAERG) show a composition bias toward basic and acidic residues.

It belongs to the universal ribosomal protein uS3 family. In terms of assembly, part of the 30S ribosomal subunit. Forms a tight complex with proteins S10 and S14.

In terms of biological role, binds the lower part of the 30S subunit head. Binds mRNA in the 70S ribosome, positioning it for translation. In Treponema pallidum (strain Nichols), this protein is Small ribosomal subunit protein uS3.